A 170-amino-acid polypeptide reads, in one-letter code: Ribosome maturation factor RimM (170 aa).

One can recognise a PRC barrel domain in the interval 95 to 168 (EDAYYYHEIV…IIKVQLMEGM (74 aa)).

Belongs to the RimM family. As to quaternary structure, binds ribosomal protein uS19.

It is found in the cytoplasm. In terms of biological role, an accessory protein needed during the final step in the assembly of 30S ribosomal subunit, possibly for assembly of the head region. Essential for efficient processing of 16S rRNA. May be needed both before and after RbfA during the maturation of 16S rRNA. It has affinity for free ribosomal 30S subunits but not for 70S ribosomes. The polypeptide is Ribosome maturation factor RimM (Oceanobacillus iheyensis (strain DSM 14371 / CIP 107618 / JCM 11309 / KCTC 3954 / HTE831)).